The primary structure comprises 266 residues: DNA-directed RNA polymerase subunit Rpo3 (266 aa).

[3Fe-4S] cluster-binding residues include Cys-205, Cys-208, and Cys-211.

Belongs to the archaeal Rpo3/eukaryotic RPB3 RNA polymerase subunit family. As to quaternary structure, part of the RNA polymerase complex. Requires [3Fe-4S] cluster as cofactor.

Its subcellular location is the cytoplasm. The catalysed reaction is RNA(n) + a ribonucleoside 5'-triphosphate = RNA(n+1) + diphosphate. DNA-dependent RNA polymerase (RNAP) catalyzes the transcription of DNA into RNA using the four ribonucleoside triphosphates as substrates. In Methanosarcina acetivorans (strain ATCC 35395 / DSM 2834 / JCM 12185 / C2A), this protein is DNA-directed RNA polymerase subunit Rpo3.